We begin with the raw amino-acid sequence, 651 residues long: Coiled-coil domain-containing protein 81 (651 aa).

The disordered stretch occupies residues leucine 194–glutamine 314. A Phosphoserine modification is found at serine 206. Composition is skewed to basic and acidic residues over residues arginine 212 to proline 222 and glycine 232 to glycine 250. A compositionally biased stretch (polar residues) spans serine 265–serine 275. Serine 273, serine 275, serine 294, and serine 416 each carry phosphoserine. 2 coiled-coil regions span residues serine 428–alanine 465 and lysine 539–alanine 566.

It localises to the cytoplasm. The protein localises to the cytoskeleton. The protein resides in the microtubule organizing center. It is found in the centrosome. This is Coiled-coil domain-containing protein 81 (Ccdc81) from Rattus norvegicus (Rat).